We begin with the raw amino-acid sequence, 27 residues long: Trypsin inhibitor 5 (27 aa).

Disulfide bonds link cysteine 1–cysteine 18, cysteine 8–cysteine 20, and cysteine 14–cysteine 26.

It localises to the secreted. In terms of biological role, inhibits trypsin. This is Trypsin inhibitor 5 from Sechium edule (Chayote).